The chain runs to 314 residues: GTPase Era (314 aa).

The 169-residue stretch at 21-189 (KSGFVGIIGR…QNTLIEQLEP (169 aa)) folds into the Era-type G domain. The segment at 29-36 (GRPNVGKS) is G1. 29-36 (GRPNVGKS) contacts GTP. A G2 region spans residues 55–59 (QTTRN). A G3 region spans residues 76-79 (DTPG). GTP contacts are provided by residues 76–80 (DTPGI) and 138–141 (NKSD). The tract at residues 138–141 (NKSD) is G4. Positions 168–170 (FSA) are G5. Residues 212–296 (IREQILQLTR…FLKLFVKVEP (85 aa)) form the KH type-2 domain.

Belongs to the TRAFAC class TrmE-Era-EngA-EngB-Septin-like GTPase superfamily. Era GTPase family. Monomer.

The protein localises to the cytoplasm. It localises to the cell inner membrane. In terms of biological role, an essential GTPase that binds both GDP and GTP, with rapid nucleotide exchange. Plays a role in 16S rRNA processing and 30S ribosomal subunit biogenesis and possibly also in cell cycle regulation and energy metabolism. This is GTPase Era from Crocosphaera subtropica (strain ATCC 51142 / BH68) (Cyanothece sp. (strain ATCC 51142)).